A 573-amino-acid chain; its full sequence is F-box/WD repeat-containing protein 5 (573 aa).

An F-box domain is found at 3-49 (EGGLPLLPDSLVYQIFLSLGPADVLAAGLVCRQWQAVSRDEFLWKEQ). One copy of the WD 1 repeat lies at 90–129 (EHTDQVLHLSFSHSGYQFASCSKDCTVKIWNNDLTISLLH). S151 carries the post-translational modification Phosphoserine; by PLK4. Residues 308-316 (RRVFDSVLD) carry the D-box motif. WD repeat units lie at residues 470-509 (TPND…CLAK) and 511-551 (RHED…RVLQ).

The protein belongs to the FBXW5 family. As to quaternary structure, part of the SCF (SKP1-CUL1-F-box) E3 ubiquitin-protein ligase complex SCF(FBXW5) composed of CUL1, SKP1, RBX1 and FBXW5. Component of the DCX(FBXW5) E3 ubiquitin ligase complex, at least composed of (CUL4A or CUL4B), DDB1, FBXW5 and RBX1. Interacts with CDC20, TSC1, TSC2 and SASS6. Interacts with EPS8. Interacts with TNFAIP8L1; TNFAIP8L1 competes with TSC2 to bind FBXW5 increasing TSC2 stability by preventing its ubiquitination. Phosphorylated at Ser-151 by PLK4 during the G1/S transition, leading to inhibit its ability to ubiquitinate SASS6. Post-translationally, ubiquitinated and degraded by the APC/C complex during mitosis and G1 phase. As to expression, widely expressed in adult and embryonal tissues.

It localises to the cytoplasm. Its pathway is protein modification; protein ubiquitination. In terms of biological role, substrate recognition component of both SCF (SKP1-CUL1-F-box protein) and DCX (DDB1-CUL4-X-box) E3 ubiquitin-protein ligase complexes. Substrate-specific adapter of the DCX(FBXW5) E3 ubiquitin-protein ligase complex which mediates the polyubiquitination and subsequent degradation of TSC2. May also act as a negative regulator of MAP3K7/TAK1 signaling in the interleukin-1B (IL1B) signaling pathway. Substrate recognition component of the SCF(FBXW5) E3 ubiquitin-protein ligase complex which mediates the ubiquitination and subsequent proteasomal degradation of SASS6 during S phase, leading to prevent centriole reduplication. The SCF(FBXW5) complex also mediates ubiquitination and degradation of actin-regulator EPS8 during G2 phase, leading to the transient degradation of EPS8 and subsequent cell shape changes required to allow mitotic progression. This chain is F-box/WD repeat-containing protein 5 (Fbxw5), found in Mus musculus (Mouse).